Reading from the N-terminus, the 376-residue chain is Chaperone protein DnaJ (376 aa).

The 66-residue stretch at 5-70 (DFYEVLGVGR…DKKAAYDQFG (66 aa)) folds into the J domain. The CR-type zinc finger occupies 132–210 (GLTKELRIPT…CHGEGRVEKS (79 aa)). Zn(2+)-binding residues include Cys-145, Cys-148, Cys-162, Cys-165, Cys-184, Cys-187, Cys-198, and Cys-201. CXXCXGXG motif repeat units follow at residues 145–152 (CDACDGSG), 162–169 (CGTCHGQG), 184–191 (CPTCHGRG), and 198–205 (CNKCHGEG).

It belongs to the DnaJ family. In terms of assembly, homodimer. It depends on Zn(2+) as a cofactor.

The protein resides in the cytoplasm. Functionally, participates actively in the response to hyperosmotic and heat shock by preventing the aggregation of stress-denatured proteins and by disaggregating proteins, also in an autonomous, DnaK-independent fashion. Unfolded proteins bind initially to DnaJ; upon interaction with the DnaJ-bound protein, DnaK hydrolyzes its bound ATP, resulting in the formation of a stable complex. GrpE releases ADP from DnaK; ATP binding to DnaK triggers the release of the substrate protein, thus completing the reaction cycle. Several rounds of ATP-dependent interactions between DnaJ, DnaK and GrpE are required for fully efficient folding. Also involved, together with DnaK and GrpE, in the DNA replication of plasmids through activation of initiation proteins. The protein is Chaperone protein DnaJ of Shewanella halifaxensis (strain HAW-EB4).